Consider the following 357-residue polypeptide: Phosphoribosylformylglycinamidine cyclo-ligase (357 aa).

It belongs to the AIR synthase family.

It is found in the cytoplasm. The enzyme catalyses 2-formamido-N(1)-(5-O-phospho-beta-D-ribosyl)acetamidine + ATP = 5-amino-1-(5-phospho-beta-D-ribosyl)imidazole + ADP + phosphate + H(+). It functions in the pathway purine metabolism; IMP biosynthesis via de novo pathway; 5-amino-1-(5-phospho-D-ribosyl)imidazole from N(2)-formyl-N(1)-(5-phospho-D-ribosyl)glycinamide: step 2/2. This chain is Phosphoribosylformylglycinamidine cyclo-ligase, found in Rhizobium leguminosarum.